The chain runs to 811 residues: Probable disease resistance protein At5g04720 (811 aa).

An RPW8 domain is found at 1–147; the sequence is MADIIGGEVV…KVDSLNEKLG (147 aa). 2 NB-ARC domains span residues 180–242 and 312–437; these read VGLD…VSQS and TYDV…NVLV. 207–214 is a binding site for ATP; that stretch reads GMSGSGKT. LRR repeat units follow at residues 650–674, 676–699, 700–722, 724–746, and 748–769; these read FPKL…ICGI, SLNS…SKLK, ALQL…ICEL, RLKY…IGKV, and TLEK…VVLL.

This sequence belongs to the disease resistance NB-LRR family.

Probable disease resistance protein. This is Probable disease resistance protein At5g04720 from Arabidopsis thaliana (Mouse-ear cress).